The primary structure comprises 67 residues: Phycobilisome 7.8 kDa linker polypeptide, allophycocyanin-associated, core (67 aa).

Positions 1-56 (GRLFKITACVPSQTRIRTQRELQNTYFTKLVPYENWFREQQRIQKMGGKIVKVELA) constitute a CpcD-like domain.

Belongs to the phycobilisome linker protein family.

Its subcellular location is the cellular thylakoid membrane. Its function is as follows. Rod linker protein, associated with allophycocyanin. Linker polypeptides determine the state of aggregation and the location of the disk-shaped phycobiliprotein units within the phycobilisome and modulate their spectroscopic properties in order to mediate a directed and optimal energy transfer. The chain is Phycobilisome 7.8 kDa linker polypeptide, allophycocyanin-associated, core (apcC) from Mastigocladus laminosus (Fischerella sp.).